We begin with the raw amino-acid sequence, 245 residues long: tRNA pseudouridine synthase A (245 aa).

Residue D52 is the Nucleophile of the active site. Y111 contributes to the substrate binding site.

This sequence belongs to the tRNA pseudouridine synthase TruA family. Homodimer.

The catalysed reaction is uridine(38/39/40) in tRNA = pseudouridine(38/39/40) in tRNA. Its function is as follows. Formation of pseudouridine at positions 38, 39 and 40 in the anticodon stem and loop of transfer RNAs. The sequence is that of tRNA pseudouridine synthase A from Rickettsia akari (strain Hartford).